Reading from the N-terminus, the 559-residue chain is Glutamine--tRNA ligase (559 aa).

Residues 44–54 carry the 'HIGH' region motif; sequence PEPNGYLHIGH. ATP-binding positions include 45–47 and 51–57; these read EPN and HIGHAKS. 2 residues coordinate L-glutamine: Asp77 and Tyr222. ATP is bound by residues Thr241 and 272–273; that span reads RL. Residues 279 to 283 carry the 'KMSKS' region motif; that stretch reads LTSKR.

This sequence belongs to the class-I aminoacyl-tRNA synthetase family. As to quaternary structure, monomer.

Its subcellular location is the cytoplasm. The catalysed reaction is tRNA(Gln) + L-glutamine + ATP = L-glutaminyl-tRNA(Gln) + AMP + diphosphate. This Actinobacillus succinogenes (strain ATCC 55618 / DSM 22257 / CCUG 43843 / 130Z) protein is Glutamine--tRNA ligase.